A 257-amino-acid chain; its full sequence is Beta-fibrinogenase mucrofibrase-4 (257 aa).

Residues 1–18 (MVLIRVLANLLILQLSYA) form the signal peptide. Positions 19–24 (QKSSEL) are excised as a propeptide. A Peptidase S1 domain is found at 25-248 (VIGGDECNIN…HLDWIKGFIA (224 aa)). 6 disulfide bridges follow: Cys31–Cys162, Cys49–Cys65, Cys97–Cys255, Cys141–Cys209, Cys173–Cys188, and Cys199–Cys224. Residues His64 and Asp109 each act as charge relay system in the active site. The active-site Charge relay system is Ser203.

This sequence belongs to the peptidase S1 family. Snake venom subfamily. In terms of assembly, monomer. In terms of tissue distribution, expressed by the venom gland.

It localises to the secreted. Functionally, snake venom serine protease with fibrinogenolytic activities. Cleaves beta-chain of fibrinogen (FGB) efficiently and shows relatively lower activity on alpha-chain. In Protobothrops mucrosquamatus (Taiwan habu), this protein is Beta-fibrinogenase mucrofibrase-4.